The sequence spans 627 residues: Nuclear receptor subfamily 4 group A member 3 (627 aa).

Residues 1-112 are activation function (AF)-1 domain; sequence MPCVQAQYSP…HHHHHHHHHQ (112 aa). Positions 1–139 are required for DNA-PK heterotrimer; that stretch reads MPCVQAQYSP…PSTSMYFKQS (139 aa). An interaction with NCOA1, NCOA2, NCOA3 and KAT2B region spans residues 1–292; that stretch reads MPCVQAQYSP…NRSSSSGEGT (292 aa). Disordered stretches follow at residues 96 to 162 and 268 to 289; these read HGYH…DELP and ASSL…SSSG. Basic residues predominate over residues 97 to 112; sequence GYHHHHHHHHHHHHHQ. A compositionally biased stretch (pro residues) spans 141 to 150; that stretch reads PSTPTTPGFP. Over residues 269–288 the composition is skewed to low complexity; the sequence is SSLLGESPSLPSPPNRSSSS. A DNA-binding region (nuclear receptor) is located at residues 290–365; it reads EGTCAVCGDN…VGMVKEVVRT (76 aa). 2 consecutive NR C4-type zinc fingers follow at residues 293-313 and 329-353; these read CAVC…CEGC and CLAN…FQKC. The segment at 365-395 is disordered; the sequence is TDSLKGRRGRLPSKPKSPLQQEPSQPSPPSP. The segment covering 378-388 has biased composition (low complexity); that stretch reads KPKSPLQQEPS. Residues 380–627 are interaction with KAT2B; the sequence is KSPLQQEPSQ…DKLFLDTLPF (248 aa). Residues 395-624 enclose the NR LBD domain; that stretch reads PPICMMNALV…SVIDKLFLDT (230 aa).

Belongs to the nuclear hormone receptor family. NR4 subfamily. In terms of assembly, interacts with SIX3 (via homeobox); differentially regulates the transcriptional activities of NR4A3. Interacts with NCOA2; potentiates the activity of the NR4A3. Interacts with NCOA1, NCOA3, MED1 and KAT2B. Interacts with EP300 and NCOA2; mediates the recruitment of MED1 in the coactivator complex. Interacts with the constituents of DNA-PK heterotrimer PRKDC, XRCC6 and XRCC5; phosphorylates and prevents NR4A3 ubiquitinylation and degradation. Interacts with NR3C1 (via nuclear receptor DNA-binding domain); the interactions represses transcription activity of NR4A3 on the POMC promoter Nur response element (NurRE). Interacts with TRIM28; the interactions potentiates NR4A3 activity on NurRE promoter. Binds DNA as a monomer and homodimer. Interacts with PARP1; activates PARP1 by improving acetylation of PARP1 and suppressing the interaction between PARP1 and SIRT1. Post-translationally, phosphorylated by PRKDC. Ubiquitous. Highest levels of expression in brain. Widely expressed throughout the arcuate nucleus region of the hypothalamus, namely in AgRP neurons.

The protein resides in the nucleus. Transcriptional activator that binds to regulatory elements in promoter regions in a cell- and response element (target)-specific manner. Induces gene expression by binding as monomers to the NR4A1 response element (NBRE) 5'-AAAAGGTCA-3' site and as homodimers to the Nur response element (NurRE) site in the promoter of their regulated target genes. Plays a role in the regulation of proliferation, survival and differentiation of many different cell types and also in metabolism and inflammation. Mediates proliferation of vascular smooth muscle, myeloid progenitor cell and type B pancreatic cells; promotes mitogen-induced vascular smooth muscle cell proliferation through transactivation of SKP2 promoter by binding a NBRE site. Upon PDGF stimulation, stimulates vascular smooth muscle cell proliferation by regulating CCND1 and CCND2 expression. In islets, induces type B pancreatic cell proliferation through up-regulation of genes that activate cell cycle, as well as genes that cause degradation of the CDKN1A. Negatively regulates myeloid progenitor cell proliferation by repressing RUNX1 in a NBRE site-independent manner. During inner ear, plays a role as a key mediator of the proliferative growth phase of semicircular canal development. Also mediates survival of neuron and smooth muscle cells; mediates CREB-induced neuronal survival, and during hippocampus development, plays a critical role in pyramidal cell survival and axonal guidance. Is required for S phase entry of the cell cycle and survival of smooth muscle cells by inducing CCND1, resulting in RB1 phosphorylation. Binds to NBRE motif in CCND1 promoter, resulting in the activation of the promoter and CCND1 transcription. Also plays a role in inflammation; upon TNF stimulation, mediates monocyte adhesion by inducing the expression of VCAM1 and ICAM1 by binding to the NBRE consensus site. In mast cells activated by Fc-epsilon receptor cross-linking, promotes the synthesis and release of cytokines but impairs events leading to degranulation. Also plays a role in metabolism; by modulating feeding behavior; and by playing a role in energy balance by inhibiting the glucocorticoid-induced orexigenic neuropeptides AGRP expression, at least in part by forming a complex with activated NR3C1 on the AGRP- glucocorticoid response element (GRE), and thus weakening the DNA binding activity of NR3C1. Upon catecholamines stimulation, regulates gene expression that controls oxidative metabolism in skeletal muscle. Plays a role in glucose transport by regulating translocation of the SLC2A4 glucose transporter to the cell surface. Finally, during gastrulation plays a crucial role in the formation of anterior mesoderm by controlling cell migration. Inhibits adipogenesis. Also participates in cardiac hypertrophy by activating PARP1. This Mus musculus (Mouse) protein is Nuclear receptor subfamily 4 group A member 3 (Nr4a3).